Here is a 101-residue protein sequence, read N- to C-terminus: CRISPR-associated endoribonuclease Cas2 (101 aa).

Asp-8 provides a ligand contact to Mg(2+).

It belongs to the CRISPR-associated endoribonuclease Cas2 protein family. Homodimer, forms a heterotetramer with a Cas1 homodimer. Mg(2+) is required as a cofactor.

In terms of biological role, CRISPR (clustered regularly interspaced short palindromic repeat), is an adaptive immune system that provides protection against mobile genetic elements (viruses, transposable elements and conjugative plasmids). CRISPR clusters contain sequences complementary to antecedent mobile elements and target invading nucleic acids. CRISPR clusters are transcribed and processed into CRISPR RNA (crRNA). Functions as a ssRNA-specific endoribonuclease. Involved in the integration of spacer DNA into the CRISPR cassette. The chain is CRISPR-associated endoribonuclease Cas2 from Treponema denticola (strain ATCC 35405 / DSM 14222 / CIP 103919 / JCM 8153 / KCTC 15104).